Consider the following 1242-residue polypeptide: Reverse gyrase 1 (1242 aa).

An RG N-terminal-type zinc finger spans residues 6-46; that stretch reads KVPPSIYTRSCPNCGGNISSQRLFNGSVCESCLKDDREFSN. The Zn(2+) site is built by Cys16, Cys19, Cys34, and Cys37. ATP is bound by residues Gln93 and 110–117; that span reads APPGLGKT. A Helicase ATP-binding domain is found at 97-298; that stretch reads TIRFLRGESF…SLMGFRPGSS (202 aa). The DEAD box motif lies at 214 to 217; it reads DDVD. The interval 615–1242 is topoisomerase I; it reads LSVKTTLFIV…ELYNEIQTIS (628 aa). Residues 619-785 enclose the Toprim domain; it reads TTLFIVESPN…NIKRAEFHEV (167 aa). Glu625 is a binding site for Mg(2+). The RG C-terminal-type; atypical zinc-finger motif lies at 703–731; sequence IKKCEKGHQIVKDLSQNKCPICGSRIVTD. 4 residues coordinate Zn(2+): Cys706, His710, Cys721, and Cys724. Asp754 is a Mg(2+) binding site. In terms of domain architecture, Topo IA-type catalytic spans 801–1242; it reads NDNLVKSQIV…ELYNEIQTIS (442 aa). Tyr965 functions as the O-(5'-phospho-DNA)-tyrosine intermediate in the catalytic mechanism.

In the N-terminal section; belongs to the DEAD box helicase family. DDVD subfamily. It in the C-terminal section; belongs to the type IA topoisomerase family. As to quaternary structure, monomer. Zn(2+) is required as a cofactor. Mg(2+) serves as cofactor.

The protein resides in the cytoplasm. It catalyses the reaction ATP + H2O = ADP + phosphate + H(+). Its activity is regulated as follows. At least one of the two reverse gyrase proteins is inhibited by actinomycin D. Highly sensitive to NaCl concentrations, maximal positive supercoiling is observed with 10 mM NaCl; as NaCl rises, supercoiling decreases. At 300 mM NaCl relaxes but does not introduce positive supercoils into negatively supercoiled substrate, at 400 mM NaCl does not relax DNA. Its function is as follows. Modifies the topological state of DNA by introducing positive supercoils in an ATP-dependent process. Increases the linking number in steps of +1. Involved in homeostatic control of DNA topology in balance with type II topoisomerase 6 (TopoVI); levels of TopoVI are constant at 80 and 88 degrees Celsius and TopoVI is probably less active at 88 degrees (characterized enzyme is from S.shibatae B12), so reverse gyrase mediates most of the fine-tuning of DNA topology. Changes the DNA linking number step-by-step in a distributive manner. At low protein to DNA ratios mostly relaxes negatively supercoiled substrate, as ratios rise more positive supercoils are introduced. At 90 degrees Celsius introduces 19 positive supercoils into pTZ18R DNA (probably 2860 bp), less than TopR2. Relaxes negatively supercoiled DNA in the absence of ATP. It cleaves transiently a single DNA strand and remains covalently bound to the 5' DNA end through a tyrosine residue. May be involved in DNA damage response. Its activity is inhibited by the DNA-binding protein 7d (Sso7d), suggesting that the Sso7d activity might counteract the overwinding effect of reverse gyrase. In terms of biological role, resolves 4-way Holliday junctions (HJ) with 20 bases in each arm in vitro, distorting the junction. Very high protein levels are required, but total enzyme content of the cell (there are 2 reverse gyrases in this organism) is estimated to be 20-200 molecules/cell. HJ resolution does not require either ATPase activity or the active tyrosine. The individual domains do not resolve HJs but do so when mixed. Also unwinds a fork substrate. There are 2 genes for this protein in the cell. During exponential growth this is the less expressed isoform (about 52 molecules per cell at 80 degrees Celsius, about 28 molecules at 88 degrees Celsius); this isoform is more active at higher temperature. Grows actively at both 80 and 88 degrees Celsius; survives a long exposure at 45 degrees Celsius without DNA replication or cell division occurring. Experiments using whole cell extracts do not distinguish which isoform is present, the results are probably a mixture of the two forms. The chain is Reverse gyrase 1 from Saccharolobus solfataricus (strain ATCC 35092 / DSM 1617 / JCM 11322 / P2) (Sulfolobus solfataricus).